A 570-amino-acid polypeptide reads, in one-letter code: Sulfite reductase [NADPH] hemoprotein beta-component (570 aa).

Residues cysteine 434, cysteine 440, cysteine 479, and cysteine 483 each contribute to the [4Fe-4S] cluster site. Residue cysteine 483 coordinates siroheme.

It belongs to the nitrite and sulfite reductase 4Fe-4S domain family. In terms of assembly, alpha(8)-beta(8). The alpha component is a flavoprotein, the beta component is a hemoprotein. The cofactor is siroheme. Requires [4Fe-4S] cluster as cofactor.

It catalyses the reaction hydrogen sulfide + 3 NADP(+) + 3 H2O = sulfite + 3 NADPH + 4 H(+). It participates in sulfur metabolism; hydrogen sulfide biosynthesis; hydrogen sulfide from sulfite (NADPH route): step 1/1. Its function is as follows. Component of the sulfite reductase complex that catalyzes the 6-electron reduction of sulfite to sulfide. This is one of several activities required for the biosynthesis of L-cysteine from sulfate. The chain is Sulfite reductase [NADPH] hemoprotein beta-component from Escherichia coli O9:H4 (strain HS).